Consider the following 574-residue polypeptide: Septation ring formation regulator EzrA (574 aa).

Topologically, residues 1 to 7 (MSNGLII) are extracellular. A helical transmembrane segment spans residues 8–26 (LIIVIAVALILAYVAAVVL). At 27–574 (RKRNETLLDS…YEKTRENIRF (548 aa)) the chain is on the cytoplasmic side. 3 coiled-coil regions span residues 104–141 (LKAK…EAKN), 267–424 (NITQ…QKVN), and 456–524 (ASDH…SIQE).

The protein belongs to the EzrA family.

Its subcellular location is the cell membrane. In terms of biological role, negative regulator of FtsZ ring formation; modulates the frequency and position of FtsZ ring formation. Inhibits FtsZ ring formation at polar sites. Interacts either with FtsZ or with one of its binding partners to promote depolymerization. The protein is Septation ring formation regulator EzrA of Streptococcus gordonii (strain Challis / ATCC 35105 / BCRC 15272 / CH1 / DL1 / V288).